We begin with the raw amino-acid sequence, 353 residues long: N-terminal EF-hand calcium-binding protein 3 (353 aa).

The 36-residue stretch at alanine 27–serine 62 folds into the EF-hand domain. The Ca(2+) site is built by aspartate 40, asparagine 42, aspartate 44, lysine 46, and glutamate 51. Residues isoleucine 172–serine 181 are required for interaction with APBA3. Positions serine 193 to serine 203 are enriched in low complexity. The segment at serine 193 to glutamine 213 is disordered. Residues aspartate 204–glutamine 213 show a composition bias toward polar residues. Residues leucine 253 to phenylalanine 342 enclose the ABM domain.

In terms of assembly, interacts with the N-terminal domain of APBA2. Interacts with NEK2. Interacts with APBA3; APBA3 seems to mediate the interaction between NECAB3 and HIF1AN. In terms of processing, phosphorylated by NEK2. In terms of tissue distribution, widely expressed, with highest levels in the brain.

The protein localises to the golgi apparatus. Its function is as follows. Inhibits the interaction of APBA2 with amyloid-beta precursor protein (APP), and hence allows formation of amyloid-beta. May enhance the activity of HIF1A and thus promote glycolysis under normoxic conditions; the function requires its ABM domain and may implicate the stabilization of the interaction between HIF1AN and APBA3. This is N-terminal EF-hand calcium-binding protein 3 (Necab3) from Mus musculus (Mouse).